Here is a 358-residue protein sequence, read N- to C-terminus: Mannonate dehydratase (358 aa).

This sequence belongs to the mannonate dehydratase family. Fe(2+) serves as cofactor. Mn(2+) is required as a cofactor.

It carries out the reaction D-mannonate = 2-dehydro-3-deoxy-D-gluconate + H2O. The protein operates within carbohydrate metabolism; pentose and glucuronate interconversion. In terms of biological role, catalyzes the dehydration of D-mannonate. The protein is Mannonate dehydratase of Lachnoclostridium phytofermentans (strain ATCC 700394 / DSM 18823 / ISDg) (Clostridium phytofermentans).